We begin with the raw amino-acid sequence, 282 residues long: CD320 antigen (282 aa).

A signal peptide spans 1-35 (MSGGWMAQVGAWRTGALGLALLLLLGLGLGLEAAA). Topologically, residues 36-229 (SPLSTPTSAQ…GDQSGSPTAY (194 aa)) are extracellular. The 38-residue stretch at 53–90 (SCPPTKFQCRTSGLCVPLTWRCDRDLDCSDGSDEEECR) folds into the LDL-receptor class A 1 domain. Intrachain disulfides connect Cys-54-Cys-67, Cys-61-Cys-80, and Cys-74-Cys-89. Ca(2+) contacts are provided by Trp-72, Asp-75, Asp-77, Asp-79, Asp-85, and Glu-86. An N-linked (GlcNAc...) asparagine glycan is attached at Asn-126. Positions 131-168 (ACLAGELRCTLSDDCIPLTWRCDGHPDCPDSSDELGCG) constitute an LDL-receptor class A 2 domain. 3 cysteine pairs are disulfide-bonded: Cys-132/Cys-145, Cys-139/Cys-158, and Cys-152/Cys-167. Ca(2+) is bound by residues Trp-150, Asp-153, His-155, Asp-157, Asp-163, and Glu-164. Residues Asn-195 and Asn-213 are each glycosylated (N-linked (GlcNAc...) asparagine). The interval 199 to 223 (MGPPVTLESVPSVGNATSSSAGDQS) is disordered. Residues 210–223 (SVGNATSSSAGDQS) are compositionally biased toward polar residues. The chain crosses the membrane as a helical span at residues 230 to 250 (GVIAAAAVLSASLVTATLLLL). Residues 251–282 (SWLRAQERLRPLGLLVAMKESLLLSEQKTSLP) lie on the Cytoplasmic side of the membrane.

Interacts (via LDL-receptor class A domains) with TCN2. Detected in the germinal center (GC) of lymphoid follicles (at protein level). Expressed abundantly on follicular dendritic cells (FDCs).

It is found in the cell membrane. In terms of biological role, receptor for transcobalamin saturated with cobalamin (TCbl). Plays an important role in cobalamin uptake. Plasma membrane protein that is expressed on follicular dendritic cells (FDC) and mediates interaction with germinal center B cells. Functions as costimulator to promote B cell responses to antigenic stimuli; promotes B cell differentiation and proliferation. Germinal center-B (GC-B) cells differentiate into memory B-cells and plasma cells (PC) through interaction with T-cells and follicular dendritic cells (FDC). CD320 augments the proliferation of PC precursors generated by IL-10. This is CD320 antigen (CD320) from Homo sapiens (Human).